Reading from the N-terminus, the 198-residue chain is Large ribosomal subunit protein bL25 (198 aa).

Belongs to the bacterial ribosomal protein bL25 family. CTC subfamily. Part of the 50S ribosomal subunit; part of the 5S rRNA/L5/L18/L25 subcomplex. Contacts the 5S rRNA. Binds to the 5S rRNA independently of L5 and L18.

In terms of biological role, this is one of the proteins that binds to the 5S RNA in the ribosome where it forms part of the central protuberance. The chain is Large ribosomal subunit protein bL25 from Bordetella avium (strain 197N).